Reading from the N-terminus, the 466-residue chain is 23S rRNA (uracil(1939)-C(5))-methyltransferase RlmD (466 aa).

Residues 1 to 54 (MVDVLNIESLDLEARGIAHRDGKVLFVEGALPGERVTVQTVRRKPSYEIAKVEE) form the TRAM domain. [4Fe-4S] cluster-binding residues include cysteine 67, cysteine 73, cysteine 76, and cysteine 155. S-adenosyl-L-methionine-binding residues include glutamine 264, phenylalanine 293, asparagine 298, glutamate 314, asparagine 342, and aspartate 363. The Nucleophile role is filled by cysteine 393.

This sequence belongs to the class I-like SAM-binding methyltransferase superfamily. RNA M5U methyltransferase family. RlmD subfamily.

The catalysed reaction is uridine(1939) in 23S rRNA + S-adenosyl-L-methionine = 5-methyluridine(1939) in 23S rRNA + S-adenosyl-L-homocysteine + H(+). In terms of biological role, catalyzes the formation of 5-methyl-uridine at position 1939 (m5U1939) in 23S rRNA. The chain is 23S rRNA (uracil(1939)-C(5))-methyltransferase RlmD from Bordetella parapertussis (strain 12822 / ATCC BAA-587 / NCTC 13253).